Consider the following 148-residue polypeptide: Large ribosomal subunit protein bL9 (148 aa).

Belongs to the bacterial ribosomal protein bL9 family.

Binds to the 23S rRNA. The protein is Large ribosomal subunit protein bL9 of Bacillus cereus (strain ATCC 10987 / NRS 248).